The primary structure comprises 472 residues: UDP-N-acetylmuramoyl-L-alanyl-D-glutamate--2,6-diaminopimelate ligase (472 aa).

Serine 21 is a binding site for UDP-N-acetyl-alpha-D-muramoyl-L-alanyl-D-glutamate. 99–105 contacts ATP; the sequence is GTNGKTS. UDP-N-acetyl-alpha-D-muramoyl-L-alanyl-D-glutamate is bound by residues 143-144, serine 170, glutamine 176, and arginine 178; that span reads TT. N6-carboxylysine is present on lysine 210. Residues arginine 367, 391–394, glycine 440, and glutamate 444 contribute to the meso-2,6-diaminopimelate site; that span reads DNPR. The Meso-diaminopimelate recognition motif motif lies at 391-394; the sequence is DNPR.

It belongs to the MurCDEF family. MurE subfamily. It depends on Mg(2+) as a cofactor. Post-translationally, carboxylation is probably crucial for Mg(2+) binding and, consequently, for the gamma-phosphate positioning of ATP.

It is found in the cytoplasm. The enzyme catalyses UDP-N-acetyl-alpha-D-muramoyl-L-alanyl-D-glutamate + meso-2,6-diaminopimelate + ATP = UDP-N-acetyl-alpha-D-muramoyl-L-alanyl-gamma-D-glutamyl-meso-2,6-diaminopimelate + ADP + phosphate + H(+). It participates in cell wall biogenesis; peptidoglycan biosynthesis. Catalyzes the addition of meso-diaminopimelic acid to the nucleotide precursor UDP-N-acetylmuramoyl-L-alanyl-D-glutamate (UMAG) in the biosynthesis of bacterial cell-wall peptidoglycan. In Anaplasma marginale (strain St. Maries), this protein is UDP-N-acetylmuramoyl-L-alanyl-D-glutamate--2,6-diaminopimelate ligase.